The sequence spans 357 residues: Peptide chain release factor 1 (357 aa).

Residue glutamine 236 is modified to N5-methylglutamine.

Belongs to the prokaryotic/mitochondrial release factor family. Post-translationally, methylated by PrmC. Methylation increases the termination efficiency of RF1.

The protein localises to the cytoplasm. Peptide chain release factor 1 directs the termination of translation in response to the peptide chain termination codons UAG and UAA. The polypeptide is Peptide chain release factor 1 (Mycobacterium sp. (strain JLS)).